Consider the following 470-residue polypeptide: Cysteine--tRNA ligase (470 aa).

C27 is a Zn(2+) binding site. A 'HIGH' region motif is present at residues 29–39 (PTVYNHIHIGN). Zn(2+) contacts are provided by C207, H232, and E236. Positions 265-269 (KMAKS) match the 'KMSKS' region motif. K268 provides a ligand contact to ATP.

Belongs to the class-I aminoacyl-tRNA synthetase family. In terms of assembly, monomer. Zn(2+) is required as a cofactor.

The protein resides in the cytoplasm. It catalyses the reaction tRNA(Cys) + L-cysteine + ATP = L-cysteinyl-tRNA(Cys) + AMP + diphosphate. In Rubrobacter xylanophilus (strain DSM 9941 / JCM 11954 / NBRC 16129 / PRD-1), this protein is Cysteine--tRNA ligase.